The following is a 23-amino-acid chain: Aldehyde dehydrogenase (23 aa).

It belongs to the aldehyde dehydrogenase family.

The catalysed reaction is an aldehyde + NAD(+) + H2O = a carboxylate + NADH + 2 H(+). This chain is Aldehyde dehydrogenase, found in Moraxella sp. (strain TAE123).